Reading from the N-terminus, the 64-residue chain is Large ribosomal subunit protein uL29 (64 aa).

It belongs to the universal ribosomal protein uL29 family.

The chain is Large ribosomal subunit protein uL29 from Cupriavidus metallidurans (strain ATCC 43123 / DSM 2839 / NBRC 102507 / CH34) (Ralstonia metallidurans).